Here is a 272-residue protein sequence, read N- to C-terminus: Secretagogin (272 aa).

EF-hand domains are found at residues 8–43, 53–89, 101–136, 145–180, 193–228, and 237–272; these read LDAA…MLKK, ERVQ…QEEN, DNSV…LFLQ, KLDE…QENF, ERKR…MMEL, and DLDK…KHKP. Positions 21, 23, 25, 27, and 32 each coordinate Ca(2+). Residues aspartate 114, aspartate 116, serine 118, tyrosine 120, glutamate 125, aspartate 158, asparagine 160, aspartate 162, arginine 164, aspartate 169, aspartate 206, serine 208, threonine 210, glutamate 217, aspartate 250, asparagine 252, aspartate 254, lysine 256, and glutamate 261 each coordinate Ca(2+).

It is found in the cytoplasm. In Danio rerio (Zebrafish), this protein is Secretagogin (scgn).